The following is a 257-amino-acid chain: Phycoerythrobilin:ferredoxin oxidoreductase (257 aa).

The protein belongs to the HY2 family.

The enzyme catalyses (3Z)-phycoerythrobilin + oxidized 2[4Fe-4S]-[ferredoxin] = 15,16-dihydrobiliverdin + reduced 2[4Fe-4S]-[ferredoxin] + 2 H(+). Catalyzes the two-electron reduction of the C2 and C3(1) diene system of 15,16-dihydrobiliverdin. This is Phycoerythrobilin:ferredoxin oxidoreductase from Synechococcus sp. (strain CC9311).